The primary structure comprises 212 residues: ER lumen protein-retaining receptor 2 (212 aa).

At 1 to 4 the chain is on the lumenal side; sequence MNIF. Residues 5–24 form a helical membrane-spanning segment; it reads RLTGDLSHLAAIIILLLKIW. At 25–32 the chain is on the cytoplasmic side; that stretch reads KSRSCAGI. The chain crosses the membrane as a helical span at residues 33–52; it reads SGKSQILFALVFTTRYLDLL. The interval 47–48 is interaction with the K-D-E-L motif on target proteins; the sequence is RY. Residues 53-58 lie on the Lumenal side of the membrane; the sequence is TSFISL. Residues 59 to 79 traverse the membrane as a helical segment; sequence YNTCMKVIYIGCAYATVYLIY. Topologically, residues 80–92 are cytoplasmic; that stretch reads AKFRATYDGNHDT. The chain crosses the membrane as a helical span at residues 93–110; sequence FRAEFLVVPVGGLAFLVN. The Lumenal portion of the chain corresponds to 111 to 116; the sequence is HDFSPL. Residues 117–135 form a helical membrane-spanning segment; that stretch reads EILWTFSIYLESVAILPQL. Residues 136–149 lie on the Cytoplasmic side of the membrane; it reads FMISKTGEAETITT. The chain crosses the membrane as a helical span at residues 150 to 168; that stretch reads HYLFCLGVYRALYLFNWIW. Positions 159–169 are interaction with the K-D-E-L motif on target proteins; it reads RALYLFNWIWR. Over 169–178 the chain is Lumenal; the sequence is RFYFEGFFDM. A helical membrane pass occupies residues 179-199; it reads IAIVAGVVQTILYCDFFYLYV. Over 200–212 the chain is Cytoplasmic; sequence TKVLKGKKLSLPA. Positions 204–207 are important for recycling of cargo proteins with the sequence motif K-D-E-L from the Golgi to the endoplasmic reticulum; that stretch reads KGKK.

It belongs to the ERD2 family.

The protein resides in the endoplasmic reticulum membrane. The protein localises to the golgi apparatus membrane. It localises to the cytoplasmic vesicle. It is found in the COPI-coated vesicle membrane. In terms of biological role, receptor for the C-terminal sequence motif K-D-E-L that is present on endoplasmic reticulum resident proteins and that mediates their recycling from the Golgi back to the endoplasmic reticulum. Binding is pH dependent, and is optimal at pH 5-5.4. This chain is ER lumen protein-retaining receptor 2 (kdelr2), found in Danio rerio (Zebrafish).